A 172-amino-acid polypeptide reads, in one-letter code: MSKEKEVLLNEEIRADEIRCVGDDGKVYGIISSDEALEIANRLGLDLVMIAADAKPPVCKIMDYGKFRYQQEKKQKEAKKKQKVIDIKEIKLSVKIAQNDINYKVKHALEFLEQGKHVRFRVFLKGREMATPEAGVVLLEKIWTMIENEANRDKEPNFEGRYVNMLVTPKKA.

This sequence belongs to the IF-3 family. Monomer.

Its subcellular location is the cytoplasm. Functionally, IF-3 binds to the 30S ribosomal subunit and shifts the equilibrium between 70S ribosomes and their 50S and 30S subunits in favor of the free subunits, thus enhancing the availability of 30S subunits on which protein synthesis initiation begins. The polypeptide is Translation initiation factor IF-3 (Campylobacter jejuni subsp. doylei (strain ATCC BAA-1458 / RM4099 / 269.97)).